A 65-amino-acid polypeptide reads, in one-letter code: VESP-VB1 (65 aa).

Residues 1–23 (MKMSILFLFALIASLACLQLTFA) form the signal peptide. AXPX repeat units follow at residues 23–26 (AAPA), 27–30 (ASPL), 31–34 (ANPG), 35–38 (ASPE), 39–42 (AAPL), 43–46 (ADPL), and 47–50 (ADPF). Positions 24–49 (APAASPLANPGASPEAAPLADPLADP) are excised as a propeptide. Leu62 carries the post-translational modification Leucine amide.

As to expression, expressed by the venom gland.

It localises to the secreted. Antimicrobial peptide. Shows activity against both Gram-positive (S.aureus MIC=1.0-3.75 ug/ml) and -negative (E.coli MIC=7.5-15 ug/ml) bacteria, as well against fungi (C.albicans MIC=30 ug/ml). Also promotes important mast cell degranulation. Shows little hemolytic activity on rabbit and human erythrocytes. Its mast cell degranulation activity may be related to the activation of G-protein coupled receptors in mast cells as well as interaction with other proteins located in cell endosomal membranes in the mast cells. The polypeptide is VESP-VB1 (Vespa bicolor (Black shield wasp)).